We begin with the raw amino-acid sequence, 216 residues long: Protein Syd (216 aa).

It belongs to the Syd family.

It is found in the cell inner membrane. In terms of biological role, interacts with the SecY protein in vivo. May bind preferentially to an uncomplexed state of SecY, thus functioning either as a chelating agent for excess SecY in the cell or as a regulatory factor that negatively controls the translocase function. This Shewanella baltica (strain OS195) protein is Protein Syd.